Reading from the N-terminus, the 186-residue chain is ATP synthase subunit delta (186 aa).

The protein belongs to the ATPase delta chain family. In terms of assembly, F-type ATPases have 2 components, F(1) - the catalytic core - and F(0) - the membrane proton channel. F(1) has five subunits: alpha(3), beta(3), gamma(1), delta(1), epsilon(1). F(0) has three main subunits: a(1), b(2) and c(10-14). The alpha and beta chains form an alternating ring which encloses part of the gamma chain. F(1) is attached to F(0) by a central stalk formed by the gamma and epsilon chains, while a peripheral stalk is formed by the delta and b chains.

The protein localises to the cell inner membrane. Functionally, f(1)F(0) ATP synthase produces ATP from ADP in the presence of a proton or sodium gradient. F-type ATPases consist of two structural domains, F(1) containing the extramembraneous catalytic core and F(0) containing the membrane proton channel, linked together by a central stalk and a peripheral stalk. During catalysis, ATP synthesis in the catalytic domain of F(1) is coupled via a rotary mechanism of the central stalk subunits to proton translocation. Its function is as follows. This protein is part of the stalk that links CF(0) to CF(1). It either transmits conformational changes from CF(0) to CF(1) or is implicated in proton conduction. The sequence is that of ATP synthase subunit delta from Brucella suis biovar 1 (strain 1330).